Consider the following 60-residue polypeptide: Large ribosomal subunit protein bL32 (60 aa).

Residues methionine 1 to glutamine 23 show a composition bias toward basic residues. The disordered stretch occupies residues methionine 1–glutamate 60.

Belongs to the bacterial ribosomal protein bL32 family.

In Microcystis aeruginosa (strain NIES-843 / IAM M-2473), this protein is Large ribosomal subunit protein bL32.